A 605-amino-acid polypeptide reads, in one-letter code: Aspartate--tRNA(Asp/Asn) ligase (605 aa).

Residue Glu-178 participates in L-aspartate binding. The tract at residues 202-205 is aspartate; the sequence is QLFK. Arg-224 is a binding site for L-aspartate. ATP is bound by residues 224–226 and Gln-233; that span reads RDE. His-458 provides a ligand contact to L-aspartate. Position 488 (Glu-488) interacts with ATP. Residue Arg-495 coordinates L-aspartate. ATP is bound at residue 540 to 543; sequence GLDR. The disordered stretch occupies residues 580-605; it reads QQLKELHVTPAKPAKTTAKTKPRPAD.

This sequence belongs to the class-II aminoacyl-tRNA synthetase family. Type 1 subfamily. Homodimer.

It is found in the cytoplasm. It carries out the reaction tRNA(Asx) + L-aspartate + ATP = L-aspartyl-tRNA(Asx) + AMP + diphosphate. In terms of biological role, aspartyl-tRNA synthetase with relaxed tRNA specificity since it is able to aspartylate not only its cognate tRNA(Asp) but also tRNA(Asn). Reaction proceeds in two steps: L-aspartate is first activated by ATP to form Asp-AMP and then transferred to the acceptor end of tRNA(Asp/Asn). The protein is Aspartate--tRNA(Asp/Asn) ligase of Thermosynechococcus vestitus (strain NIES-2133 / IAM M-273 / BP-1).